A 284-amino-acid chain; its full sequence is NAD kinase (284 aa).

Asp-70 acts as the Proton acceptor in catalysis. NAD(+) contacts are provided by residues 70–71 (DG), 139–140 (NE), Lys-167, Asp-169, Leu-177, 180–185 (TAYNLS), and Gln-236.

This sequence belongs to the NAD kinase family. A divalent metal cation serves as cofactor.

The protein resides in the cytoplasm. The catalysed reaction is NAD(+) + ATP = ADP + NADP(+) + H(+). Functionally, involved in the regulation of the intracellular balance of NAD and NADP, and is a key enzyme in the biosynthesis of NADP. Catalyzes specifically the phosphorylation on 2'-hydroxyl of the adenosine moiety of NAD to yield NADP. The chain is NAD kinase from Helicobacter pylori (strain J99 / ATCC 700824) (Campylobacter pylori J99).